We begin with the raw amino-acid sequence, 411 residues long: 4-coumarate--CoA ligase (411 aa).

It belongs to the ATP-dependent AMP-binding enzyme family.

The catalysed reaction is (E)-4-coumarate + ATP + CoA = (E)-4-coumaroyl-CoA + AMP + diphosphate. Converts p-coumaric acid into p-coumaryl CoA. This is necessary for the activation of the photoactive yellow protein (PYP) chromophore. This Cereibacter sphaeroides (strain ATCC 17023 / DSM 158 / JCM 6121 / CCUG 31486 / LMG 2827 / NBRC 12203 / NCIMB 8253 / ATH 2.4.1.) (Rhodobacter sphaeroides) protein is 4-coumarate--CoA ligase (pcl).